Here is a 551-residue protein sequence, read N- to C-terminus: E3 ubiquitin-protein ligase HEL1 (551 aa).

The TRIAD supradomain stretch occupies residues 175–388; the sequence is NDFTCIICCD…KNFFQCTMYK (214 aa). Positions 179, 182, 200, 203, 301, 304, 309, 314, 341, and 344 each coordinate Zn(2+). Residues 179–225 form an RING-type 1 zinc finger; that stretch reads CIICCDKKDTETFALECGHEYCINCYRHYIKDKLHEGNIITCMDCSL. An IBR-type zinc finger spans residues 242 to 314; that stretch reads SKLMDSSIKS…GFEVHSPADC (73 aa). An RING-type 2; atypical zinc finger spans residues 341 to 370; the sequence is CPKCSVNIEKNGGCNHMVCSSCKYEFCWIC. Cysteine 354 is an active-site residue. Cysteine 359, cysteine 362, cysteine 367, cysteine 370, histidine 377, and cysteine 384 together coordinate Zn(2+).

The protein belongs to the RBR family. In terms of assembly, interacts with the E2 ubiquitin-conjugating enzyme UBC4 and histones H3 and H4.

The catalysed reaction is [E2 ubiquitin-conjugating enzyme]-S-ubiquitinyl-L-cysteine + [acceptor protein]-L-lysine = [E2 ubiquitin-conjugating enzyme]-L-cysteine + [acceptor protein]-N(6)-ubiquitinyl-L-lysine.. It participates in protein modification; protein ubiquitination. Probable ubiquitin-protein ligase involved in the degradation-related ubiquitination of histones. Contributes to the post-translational regulation of histone protein levels by polyubiquitination of excess histones for subsequent degradation. The polypeptide is E3 ubiquitin-protein ligase HEL1 (Saccharomyces cerevisiae (strain ATCC 204508 / S288c) (Baker's yeast)).